We begin with the raw amino-acid sequence, 132 residues long: SH2 domain-containing protein 1B (132 aa).

In terms of domain architecture, SH2 spans Y5–I101. Y127 bears the Phosphotyrosine mark.

In terms of assembly, binds to the phosphorylated receptors CD84, SLAMF1, LY9 and CD244. Does not bind to non-phosphorylated SLAMF1. Interacts with SLAMF7 (via ITSM phosphorylated on 'Tyr-304'). Interacts with Src kinases HCK, LYN, FYN, FGR and LCK (via kinase domains). Interacts (phosphorylated at Tyr-127) with PLCG1.

In terms of biological role, cytoplasmic adapter regulating receptors of the signaling lymphocytic activation molecule (SLAM) family such as CD84, SLAMF1, LY9 and CD244. In SLAM signaling seems to cooperate with SH2D1A/SAP. Plays a role in regulation of effector functions of natural killer (NK) cells by controlling signal transduction through CD244/2B4 without effecting its tyrosine phosphorylation; downstream signaling involves PLCG1 and ERK activation. Activation of SLAMF7-mediated NK cell function does not effect receptor tyrosine phosphorylation but distal signaling. In the context of NK cell-mediated cytotoxicity does not enhance conjugate formation with target cells but stimulates polarization of the microtubule-organizing center and cytotoxic granules toward the NK cell synapse. Negatively regulates CD40-induced cytokine production in dendritic cells downstream of SLAM family receptors probably by inducing activation of the PI3K pathway to inhibit p38 MAPK and JNK activation. The protein is SH2 domain-containing protein 1B (SH2D1B) of Homo sapiens (Human).